Consider the following 404-residue polypeptide: Cytoplasmic 60S subunit biogenesis factor REI1 homolog 1 (404 aa).

C2H2-type zinc fingers lie at residues 4–28 (LTCNACNMEFKDEEERNLHYKSDWH) and 68–92 (YTCAICAKGYRSSKAHEQHLQSRSH). Residues 119–169 (QHRGSIDDDSEDEWVEVDSDEELAAEEASDSLSKLNVNESGSAEDMDDDGD) are disordered. 2 stretches are compositionally biased toward acidic residues: residues 125-147 (DDDSEDEWVEVDSDEELAAEEAS) and 160-169 (SAEDMDDDGD). C2H2-type zinc fingers lie at residues 178-201 (TCCLMCDKKHKTLESCMLHMHKHH) and 229-256 (FMCLYCNELCRPFSSLEAVRKHMEAKSH).

It belongs to the REI1 family. In terms of assembly, can form homodimer. Interacts with RLP24, RPL24A, RPL24B, EBP1 and JJJ1.

The protein resides in the cytoplasm. Pre-60S-associated factor involved in the cytoplasmic maturation of the 60S subunit. Involved in the dissociation and recycling of other late pre-60S factors before newly synthesized large ribosomal subunits enter translation. Can complement the growth defect of a yeast mutant lacking REI1. Required for leaf growth under cold temperature conditions. This chain is Cytoplasmic 60S subunit biogenesis factor REI1 homolog 1, found in Arabidopsis thaliana (Mouse-ear cress).